Here is a 1565-residue protein sequence, read N- to C-terminus: Major cell-surface adhesin PAc (1565 aa).

The signal sequence occupies residues 1–38 (MKVKKTYGFRKSKISKTLCGAVLGTVAAVSVAGQKVFA). Residues 42–54 (TTTSDVDTKVVGT) show a composition bias toward low complexity. A disordered region spans residues 42 to 81 (TTTSDVDTKVVGTQTGNPATNLPEAQGSASKEAEQSQTKL). Positions 72–81 (KEAEQSQTKL) are enriched in basic and acidic residues. 4 Ag I/II A repeats span residues 146–220 (KKTT…QKTN), 221–302 (AANQ…QEAN), 303–384 (AANE…KKAN), and 385–466 (AANE…QKDL). The heptad repeats of Y-[EQ]-X-X-L-A-X stretch occupies residues 203 to 448 (EAKLAQYQAD…KRNADAKADY (246 aa)). A V-region (lectin-like) region spans residues 461 to 834 (KYQKDLADYP…VNVPKVTKEK (374 aa)). Disordered stretches follow at residues 827–985 (VPKV…PTPP) and 1486–1511 (NTVKTTTPEDPADPTDPQDPSSPRTS). One copy of the P1 repeat lies at 848 to 887 (TYETEKPLKPAPVAPNYEKEPTPPTRTPDQAEPNKPTPPT). A P2 repeat occupies 888–926 (YETEKPLEPAPVEPSYEAEPTPPTRTPDQAEPNKPTPPT). Residues 927–964 (YETEKPLEPAPVEPSYEAEPTPPTPTPDQPEPNKPVEP) form a P3 repeat. The segment covering 946–961 (PTPPTPTPDQPEPNKP) has biased composition (pro residues). The LPXTG sorting signal motif lies at 1532–1536 (LPNTG). Residue Thr-1535 is modified to Pentaglycyl murein peptidoglycan amidated threonine. A propeptide spans 1536–1565 (GVTNNAYMPLLGIIGLVTSFSLLGLKAKKD) (removed by sortase).

This sequence belongs to the antigen I/II family.

It localises to the secreted. Its subcellular location is the cell wall. Functionally, surface protein antigen implicated in dental caries. This Streptococcus mutans protein is Major cell-surface adhesin PAc.